Here is a 185-residue protein sequence, read N- to C-terminus: C-phycoerythrin beta chain (185 aa).

The (2R,3E)-phycoerythrobilin site is built by Cys-49 and Cys-60. Asn-71 is subject to N4-methylasparagine. The (2R,3E)-phycoerythrobilin site is built by Cys-81 and Cys-166.

It belongs to the phycobiliprotein family. As to quaternary structure, heterodimer of an alpha and a beta chain. Contains three covalently linked bilin chromophores.

The protein localises to the cellular thylakoid membrane. Light-harvesting photosynthetic bile pigment-protein from the phycobiliprotein complex. This is C-phycoerythrin beta chain (cpeB) from Pseudanabaena tenuis (strain PCC 7409).